A 205-amino-acid polypeptide reads, in one-letter code: Thiamine-phosphate synthase (205 aa).

4-amino-2-methyl-5-(diphosphooxymethyl)pyrimidine-binding positions include 35-39 (QYRDK) and Asn67. The Mg(2+) site is built by Asp68 and Asp86. Position 105 (Thr105) interacts with 4-amino-2-methyl-5-(diphosphooxymethyl)pyrimidine. 132–134 (SLT) contributes to the 2-[(2R,5Z)-2-carboxy-4-methylthiazol-5(2H)-ylidene]ethyl phosphate binding site. Residue Lys135 participates in 4-amino-2-methyl-5-(diphosphooxymethyl)pyrimidine binding. Position 162 (Gly162) interacts with 2-[(2R,5Z)-2-carboxy-4-methylthiazol-5(2H)-ylidene]ethyl phosphate.

It belongs to the thiamine-phosphate synthase family. It depends on Mg(2+) as a cofactor.

It carries out the reaction 2-[(2R,5Z)-2-carboxy-4-methylthiazol-5(2H)-ylidene]ethyl phosphate + 4-amino-2-methyl-5-(diphosphooxymethyl)pyrimidine + 2 H(+) = thiamine phosphate + CO2 + diphosphate. The enzyme catalyses 2-(2-carboxy-4-methylthiazol-5-yl)ethyl phosphate + 4-amino-2-methyl-5-(diphosphooxymethyl)pyrimidine + 2 H(+) = thiamine phosphate + CO2 + diphosphate. The catalysed reaction is 4-methyl-5-(2-phosphooxyethyl)-thiazole + 4-amino-2-methyl-5-(diphosphooxymethyl)pyrimidine + H(+) = thiamine phosphate + diphosphate. It functions in the pathway cofactor biosynthesis; thiamine diphosphate biosynthesis; thiamine phosphate from 4-amino-2-methyl-5-diphosphomethylpyrimidine and 4-methyl-5-(2-phosphoethyl)-thiazole: step 1/1. Its function is as follows. Condenses 4-methyl-5-(beta-hydroxyethyl)thiazole monophosphate (THZ-P) and 2-methyl-4-amino-5-hydroxymethyl pyrimidine pyrophosphate (HMP-PP) to form thiamine monophosphate (TMP). The protein is Thiamine-phosphate synthase of Pseudomonas savastanoi pv. phaseolicola (strain 1448A / Race 6) (Pseudomonas syringae pv. phaseolicola (strain 1448A / Race 6)).